The primary structure comprises 379 residues: Ascochitine biosynthesis cluster protein 8 (379 aa).

A run of 3 helical transmembrane segments spans residues 87-107 (ELIA…LDLE), 116-136 (VGPV…VAAC), and 141-161 (IKVF…VVAL).

The protein localises to the membrane. It participates in mycotoxin biosynthesis. Part of the gene cluster that mediates the biosynthesis of the selective antifungal agent ascochitine, an o-quinone methide that plays a possible protective role against other microbial competitors in nature and is considered to be important for pathogenicity of legume-associated Didymella species. The pathway probably begins with the synthesis of a keto-aldehyde intermediate by the ascochitine non-reducing polyketide synthase pksAC from successive condensations of 4 malonyl-CoA units, presumably with a simple acetyl-CoA starter unit. Release of the keto-aldehyde intermediate is consistent with the presence of the C-terminal reductive release domain. The HR-PKS (orf7) probably makes a diketide starter unit which is passed to the non-reducing polyketide synthase pksAC for further extension, producing ascochital and ascochitine. The aldehyde dehydrogenase (orf1), the 2-oxoglutarate-dependent dioxygenase (orf3) and the dehydrogenase (orf9) are probably involved in subsequent oxidations of methyl groups to the carboxylic acid of the heterocyclic ring. The ascochitine gene cluster also includes a gene encoding a short peptide with a cupin domain (orf2) that is often found in secondary metabolite gene clusters and which function has still to be determined. This chain is Ascochitine biosynthesis cluster protein 8, found in Didymella fabae (Leaf and pod spot disease fungus).